The following is a 279-amino-acid chain: Oxygen-dependent coproporphyrinogen-III oxidase (279 aa).

Ser-102 contacts substrate. Positions 106 and 116 each coordinate a divalent metal cation. His-116 (proton donor) is an active-site residue. Residue Asn-118–Arg-120 participates in substrate binding. A divalent metal cation-binding residues include His-149 and His-179. An important for dimerization region spans residues Tyr-244 to Ala-279.

It belongs to the aerobic coproporphyrinogen-III oxidase family. In terms of assembly, homodimer. A divalent metal cation serves as cofactor.

It localises to the cytoplasm. The catalysed reaction is coproporphyrinogen III + O2 + 2 H(+) = protoporphyrinogen IX + 2 CO2 + 2 H2O. It functions in the pathway porphyrin-containing compound metabolism; protoporphyrin-IX biosynthesis; protoporphyrinogen-IX from coproporphyrinogen-III (O2 route): step 1/1. Its function is as follows. Involved in the heme biosynthesis. Catalyzes the aerobic oxidative decarboxylation of propionate groups of rings A and B of coproporphyrinogen-III to yield the vinyl groups in protoporphyrinogen-IX. In Rickettsia bellii (strain OSU 85-389), this protein is Oxygen-dependent coproporphyrinogen-III oxidase.